Consider the following 351-residue polypeptide: Uroporphyrinogen decarboxylase (351 aa).

Substrate contacts are provided by residues 26-30 (RQAGR), aspartate 76, tyrosine 153, serine 208, and histidine 323.

The protein belongs to the uroporphyrinogen decarboxylase family. Homodimer.

It localises to the cytoplasm. The enzyme catalyses uroporphyrinogen III + 4 H(+) = coproporphyrinogen III + 4 CO2. It participates in porphyrin-containing compound metabolism; protoporphyrin-IX biosynthesis; coproporphyrinogen-III from 5-aminolevulinate: step 4/4. Its function is as follows. Catalyzes the decarboxylation of four acetate groups of uroporphyrinogen-III to yield coproporphyrinogen-III. This chain is Uroporphyrinogen decarboxylase, found in Prochlorococcus marinus (strain MIT 9211).